Here is a 109-residue protein sequence, read N- to C-terminus: uncharacterized protein (109 aa).

It to E.coli YtfG C-terminal region.

This is an uncharacterized protein from Haemophilus influenzae (strain ATCC 51907 / DSM 11121 / KW20 / Rd).